We begin with the raw amino-acid sequence, 449 residues long: Bifunctional protein GlmU (449 aa).

Positions 1-229 (MNHFAVILAA…FEETIGVNDR (229 aa)) are pyrophosphorylase. UDP-N-acetyl-alpha-D-glucosamine is bound by residues 8–11 (LAAG), K22, Q72, and 77–78 (GT). D102 serves as a coordination point for Mg(2+). G139, E154, N169, and N227 together coordinate UDP-N-acetyl-alpha-D-glucosamine. N227 serves as a coordination point for Mg(2+). A linker region spans residues 230-250 (VALAQAETSMRKRTNEHWMRQ). Positions 251-449 (GVTFIDPAST…ERQTTKPDYR (199 aa)) are N-acetyltransferase. UDP-N-acetyl-alpha-D-glucosamine-binding residues include R332 and K350. H362 functions as the Proton acceptor in the catalytic mechanism. UDP-N-acetyl-alpha-D-glucosamine contacts are provided by Y365 and N376. Acetyl-CoA is bound by residues 385–386 (NY), A422, and R439.

This sequence in the N-terminal section; belongs to the N-acetylglucosamine-1-phosphate uridyltransferase family. In the C-terminal section; belongs to the transferase hexapeptide repeat family. As to quaternary structure, homotrimer. Mg(2+) is required as a cofactor.

The protein resides in the cytoplasm. It catalyses the reaction alpha-D-glucosamine 1-phosphate + acetyl-CoA = N-acetyl-alpha-D-glucosamine 1-phosphate + CoA + H(+). The catalysed reaction is N-acetyl-alpha-D-glucosamine 1-phosphate + UTP + H(+) = UDP-N-acetyl-alpha-D-glucosamine + diphosphate. The protein operates within nucleotide-sugar biosynthesis; UDP-N-acetyl-alpha-D-glucosamine biosynthesis; N-acetyl-alpha-D-glucosamine 1-phosphate from alpha-D-glucosamine 6-phosphate (route II): step 2/2. It functions in the pathway nucleotide-sugar biosynthesis; UDP-N-acetyl-alpha-D-glucosamine biosynthesis; UDP-N-acetyl-alpha-D-glucosamine from N-acetyl-alpha-D-glucosamine 1-phosphate: step 1/1. It participates in bacterial outer membrane biogenesis; LPS lipid A biosynthesis. In terms of biological role, catalyzes the last two sequential reactions in the de novo biosynthetic pathway for UDP-N-acetylglucosamine (UDP-GlcNAc). The C-terminal domain catalyzes the transfer of acetyl group from acetyl coenzyme A to glucosamine-1-phosphate (GlcN-1-P) to produce N-acetylglucosamine-1-phosphate (GlcNAc-1-P), which is converted into UDP-GlcNAc by the transfer of uridine 5-monophosphate (from uridine 5-triphosphate), a reaction catalyzed by the N-terminal domain. This Exiguobacterium sibiricum (strain DSM 17290 / CCUG 55495 / CIP 109462 / JCM 13490 / 255-15) protein is Bifunctional protein GlmU.